The chain runs to 127 residues: MKYMVSFDQERMLKPAVIGGIINGILGAICCLCYVIGGAVAAHLYVNAGGICDYENCGLVGAISGVIGGVIASILSFLFMSAYLSALGLKAAMFTGASFIIGFITAIIFGAILGAVGGVIYVVIKNR.

3 consecutive transmembrane segments (helical) span residues 16–36, 59–79, and 100–120; these read AVIGGIINGILGAICCLCYVI, LVGAISGVIGGVIASILSFLF, and IIGFITAIIFGAILGAVGGVI.

Its subcellular location is the cell membrane. This is an uncharacterized protein from Methanocaldococcus jannaschii (strain ATCC 43067 / DSM 2661 / JAL-1 / JCM 10045 / NBRC 100440) (Methanococcus jannaschii).